We begin with the raw amino-acid sequence, 336 residues long: Dihydroorotate dehydrogenase (quinone) (336 aa).

FMN-binding positions include 62–66 (AGLDK) and T86. K66 provides a ligand contact to substrate. 111–115 (NRMGF) is a binding site for substrate. FMN contacts are provided by N139 and N172. N172 is a substrate binding site. Residue S175 is the Nucleophile of the active site. N177 is a binding site for substrate. K217 and T245 together coordinate FMN. 246–247 (NT) serves as a coordination point for substrate. FMN-binding positions include G268, G297, and 318–319 (YS).

This sequence belongs to the dihydroorotate dehydrogenase family. Type 2 subfamily. Monomer. Requires FMN as cofactor.

It is found in the cell membrane. The enzyme catalyses (S)-dihydroorotate + a quinone = orotate + a quinol. It participates in pyrimidine metabolism; UMP biosynthesis via de novo pathway; orotate from (S)-dihydroorotate (quinone route): step 1/1. Its function is as follows. Catalyzes the conversion of dihydroorotate to orotate with quinone as electron acceptor. The polypeptide is Dihydroorotate dehydrogenase (quinone) (Klebsiella pneumoniae (strain 342)).